The chain runs to 1481 residues: Cystic fibrosis transmembrane conductance regulator (1481 aa).

Over 1–77 (MQRSPLEKAS…KLINALRRCF (77 aa)) the chain is Cytoplasmic. Residues 78-98 (FWRFMFYGIILYLGEVTKAVQ) form a helical membrane-spanning segment. The ABC transmembrane type-1 1 domain occupies 81-365 (FMFYGIILYL…WAVQTWYDSL (285 aa)). Residues 99 to 122 (PLLLGRIIASYDPDNKVERSIAIY) are Extracellular-facing. The helical transmembrane segment at 123-146 (LGIGLCLLFIVRTLLLHPAIFGLH) threads the bilayer. The Cytoplasmic segment spans residues 147-195 (HIGMQMRIAMFSLIYKKTLKLSSRVLDKISIGQLVSLLSNNLNKFDEGL). Residues 196–216 (ALAHFVWIAPLQVTLLMGLLW) form a helical membrane-spanning segment. Residues 217–222 (ELLQAF) are Extracellular-facing. The chain crosses the membrane as a helical span at residues 223-243 (TFCGLAFLVVLAFLQAGLGKM). Residues 244 to 298 (MMKYRDQRAGKINERLVITSEIIENIQSVKAYCWEEAMEKIIENLRQTELKLTRK) lie on the Cytoplasmic side of the membrane. Residues 299 to 319 (AAYVRYLNSSAFFFSGFFVVF) traverse the membrane as a helical segment. Residues 320-339 (LSVLPYALLKGIILRKIFTT) lie on the Extracellular side of the membrane. A helical transmembrane segment spans residues 340-358 (ISFCIVLRMAVTRQFPWAV). The Cytoplasmic segment spans residues 359-858 (QTWYDSLGAI…YLRYITVHKS (500 aa)). ATP-binding positions include tryptophan 401, 457 to 464 (GSTGAGKT), and glutamine 492. An ABC transporter 1 domain is found at 423–645 (NGDNNLFFSN…RPDFSSKLMG (223 aa)). Cysteine 523 is lipidated: S-palmitoyl cysteine. 2 positions are modified to phosphoserine: serine 548 and serine 659. A disordered R region region spans residues 653–831 (TAERRNSIIT…EEINEEDLRD (179 aa)). Serine 669 bears the Phosphoserine; by PKA mark. The residue at position 685 (serine 685) is a Phosphoserine. A Glycyl lysine isopeptide (Lys-Gly) (interchain with G-Cter in ubiquitin) cross-link involves residue lysine 687. A phosphoserine mark is found at serine 699 and serine 711. Threonine 716 carries the phosphothreonine modification. A phosphoserine mark is found at serine 736, serine 767, serine 790, serine 795, and serine 813. The chain crosses the membrane as a helical span at residues 859-879 (LMFVLIWCLVVFLAEVAASLV). Positions 859–1155 (LMFVLIWCLV…AVNSSIDVDS (297 aa)) constitute an ABC transmembrane type-1 2 domain. At 880–918 (VLCLFPKILFQDKGNSTKSANNSYAVIITSTSSYYIFYI) the chain is on the extracellular side. N-linked (GlcNAc...) asparagine glycosylation is found at asparagine 894 and asparagine 900. Residues 919-939 (YVGVADTLLALGLFRGLPLVH) traverse the membrane as a discontinuously helical segment. Residues 940–990 (TLITVSKTLHHKMLQSVLQAPMSTLNTLKTGGILNRFSKDIAVLDDLLPLT) lie on the Cytoplasmic side of the membrane. The chain crosses the membrane as a helical span at residues 991–1011 (IFDFVQLLLIVIGAVVVVSVL). The Extracellular portion of the chain corresponds to 1012 to 1013 (QP). A helical membrane pass occupies residues 1014–1034 (YIFLATVPVIAAFILLRAYFL). The Cytoplasmic segment spans residues 1035–1095 (HTSQQLKQLE…TANWFLYLST (61 aa)). A helical membrane pass occupies residues 1096–1116 (LRWFQMRIEMIFVIFFIAVTF). Residues 1117–1130 (ISILTTGEGEGRVG) are Extracellular-facing. A helical membrane pass occupies residues 1131 to 1151 (IILTLAMNIMGTLQWAVNSSI). Residues 1152–1481 (DVDSLMRSVS…TEEEVQETKL (330 aa)) are Cytoplasmic-facing. Residues 1211-1444 (MTVKDLTAKY…KSLFRQAISP (234 aa)) form the ABC transporter 2 domain. ATP contacts are provided by residues tyrosine 1220 and 1245–1252 (GRTGSGKS). Residues 1387–1481 (RTLKQAFADC…TEEEVQETKL (95 aa)) are interaction with GORASP2. Cysteine 1396 carries the S-palmitoyl cysteine lipid modification. Residues 1452–1481 (PQRNSSRQKSRSNIAALKEETEEEVQETKL) form a disordered region. Low complexity predominate over residues 1453-1464 (QRNSSRQKSRSN). A Phosphoserine modification is found at serine 1457. Residues 1471–1481 (ETEEEVQETKL) show a composition bias toward acidic residues. The PDZ-binding signature appears at 1479 to 1481 (TKL).

It belongs to the ABC transporter superfamily. ABCC family. CFTR transporter (TC 3.A.1.202) subfamily. As to quaternary structure, monomer; does not require oligomerization for channel activity. May form oligomers in the membrane. Interacts with SLC26A3, SLC26A6 and NHERF1. Interacts with SHANK2. Interacts with MYO6. Interacts (via C-terminus) with GOPC (via PDZ domain); this promotes CFTR internalization and thereby decreases channel activity. Interacts with SLC4A7 through NHERF1. Found in a complex with MYO5B and RAB11A. Interacts with ANO1. Interacts with SLC26A8. Interacts with AHCYL1; the interaction increases CFTR activity. Interacts with CSE1L. The core-glycosylated form interacts with GORASP2 (via PDZ GRASP-type 1 domain) in respone to ER stress. Interacts with MARCHF2; the interaction leads to CFTR ubiqtuitination and degradation. Interacts with ADGRG2. In terms of processing, N-glycosylated. Post-translationally, phosphorylated; cAMP treatment promotes phosphorylation and activates the channel. Dephosphorylation decreases the ATPase activity (in vitro). Phosphorylation at PKA sites activates the channel. Phosphorylation at PKC sites enhances the response to phosphorylation by PKA. Phosphorylated by AMPK; this inhibits channel activity. Ubiquitinated, leading to its degradation in the lysosome. Deubiquitination by USP10 in early endosomes enhances its endocytic recycling to the cell membrane. Ubiquitinated by RNF185 during ER stress. Ubiquitinated by MARCHF2.

It localises to the apical cell membrane. It is found in the early endosome membrane. The protein resides in the cell membrane. The protein localises to the recycling endosome membrane. Its subcellular location is the endoplasmic reticulum membrane. It localises to the nucleus. The catalysed reaction is ATP + H2O + closed Cl(-) channel = ADP + phosphate + open Cl(-) channel.. It carries out the reaction chloride(in) = chloride(out). The enzyme catalyses hydrogencarbonate(in) = hydrogencarbonate(out). It catalyses the reaction ATP + H2O = ADP + phosphate + H(+). Its function is as follows. Epithelial ion channel that plays an important role in the regulation of epithelial ion and water transport and fluid homeostasis. Mediates the transport of chloride ions across the cell membrane. Possesses an intrinsic ATPase activity and utilizes ATP to gate its channel; the passive flow of anions through the channel is gated by cycles of ATP binding and hydrolysis by the ATP-binding domains. The ion channel is also permeable to HCO(3)(-); selectivity depends on the extracellular chloride concentration. Exerts its function also by modulating the activity of other ion channels and transporters. Contributes to the regulation of the pH and the ion content of the epithelial fluid layer. Modulates the activity of the epithelial sodium channel (ENaC) complex, in part by regulating the cell surface expression of the ENaC complex. May regulate bicarbonate secretion and salvage in epithelial cells by regulating the transporter SLC4A7. Can inhibit the chloride channel activity of ANO1. Plays a role in the chloride and bicarbonate homeostasis during sperm epididymal maturation and capacitation. This chain is Cystic fibrosis transmembrane conductance regulator, found in Muntiacus muntjak (Barking deer).